Here is a 156-residue protein sequence, read N- to C-terminus: Cyclic pyranopterin monophosphate synthase (156 aa).

Substrate is bound by residues 75–77 and 111–112; these read LCH and ME. Residue aspartate 126 is part of the active site.

The protein belongs to the MoaC family. In terms of assembly, homohexamer; trimer of dimers.

The enzyme catalyses (8S)-3',8-cyclo-7,8-dihydroguanosine 5'-triphosphate = cyclic pyranopterin phosphate + diphosphate. The protein operates within cofactor biosynthesis; molybdopterin biosynthesis. Functionally, catalyzes the conversion of (8S)-3',8-cyclo-7,8-dihydroguanosine 5'-triphosphate to cyclic pyranopterin monophosphate (cPMP). This is Cyclic pyranopterin monophosphate synthase from Corynebacterium glutamicum (strain ATCC 13032 / DSM 20300 / JCM 1318 / BCRC 11384 / CCUG 27702 / LMG 3730 / NBRC 12168 / NCIMB 10025 / NRRL B-2784 / 534).